Consider the following 414-residue polypeptide: TAR DNA-binding protein 43 (414 aa).

Glycyl lysine isopeptide (Lys-Gly) (interchain with G-Cter in SUMO2) cross-links involve residues K79, K84, K95, K102, and K181. 2 consecutive RRM domains span residues 104 to 200 (SDLI…RCTE) and 191 to 262 (RKVF…NAEP). A Phosphoserine modification is found at S183. The interaction with UBQLN2 stretch occupies residues 216–414 (EVVDVFIPKP…MDSKSSGWGM (199 aa)). Residues 261-274 (EPKHNSNRQLERSG) are compositionally biased toward basic and acidic residues. 2 disordered regions span residues 261–301 (EPKH…GLGN) and 341–414 (ASQQ…GWGM). Residue K263 forms a Glycyl lysine isopeptide (Lys-Gly) (interchain with G-Cter in SUMO2) linkage. Over residues 275 to 301 (RFGGNPGGFGNQGGFGNSRGGGAGLGN) the composition is skewed to gly residues. Residue S292 is modified to Phosphoserine. The residue at position 293 (R293) is an Omega-N-methylarginine. Composition is skewed to low complexity over residues 342–358 (SQQNQSGPSGNNQSQGS) and 368–392 (GSGNNSYSGSNSGAPLGWGSASNAG). The segment covering 393-402 (SGSGFNGGFG) has biased composition (gly residues). The span at 405–414 (MDSKSSGWGM) shows a compositional bias: polar residues.

Homodimer. Homooligomer (via its N-terminal domain). Interacts with BRDT. Binds specifically to pyrimidine-rich motifs of TAR DNA and to single stranded TG repeated sequences. Binds to RNA, specifically to UG repeated sequences with a minimum of six contiguous repeats. Interacts with ATXN2; the interaction is RNA-dependent. Interacts with MATR3. Interacts with UBQLN2. Interacts with HNRNPA2B1. Interacts with ZNF106. Interacts with CNOT7/CAF1. Interacts with CRY2. Interacts with PPIA/CYPA; the interaction is dependent on RNA-binding activity of TARDBP and PPIase activity of PPIA/CYPA. Acetylation of PPIA/CYPA at 'Lys-125' favors the interaction of TARDBP with PPIA/CYPA. In terms of processing, hyperphosphorylated. Post-translationally, ubiquitinated.

It localises to the nucleus. The protein resides in the cytoplasm. Its subcellular location is the stress granule. The protein localises to the mitochondrion. In terms of biological role, RNA-binding protein that is involved in various steps of RNA biogenesis and processing. Preferentially binds, via its two RNA recognition motifs RRM1 and RRM2, to GU-repeats on RNA molecules predominantly localized within long introns and in the 3'UTR of mRNAs. In turn, regulates the splicing of many non-coding and protein-coding RNAs including proteins involved in neuronal survival, as well as mRNAs that encode proteins relevant for neurodegenerative diseases. Plays a role in maintaining mitochondrial homeostasis by regulating the processing of mitochondrial transcripts. Also regulates mRNA stability by recruiting CNOT7/CAF1 deadenylase on mRNA 3'UTR leading to poly(A) tail deadenylation and thus shortening. In response to oxidative insult, associates with stalled ribosomes localized to stress granules (SGs) and contributes to cell survival. Also participates in the normal skeletal muscle formation and regeneration, forming cytoplasmic myo-granules and binding mRNAs that encode sarcomeric proteins. Plays a role in the maintenance of the circadian clock periodicity via stabilization of the CRY1 and CRY2 proteins in a FBXL3-dependent manner. Negatively regulates the expression of CDK6. Regulates the expression of HDAC6, ATG7 and VCP in a PPIA/CYPA-dependent manner. This Mus musculus (Mouse) protein is TAR DNA-binding protein 43 (Tardbp).